The sequence spans 955 residues: uncharacterized protein (955 aa).

The N-terminal stretch at M1–A24 is a signal peptide. The interval S127–R146 is disordered. 6 helical membrane passes run I597–A617, L707–I727, A739–F759, V781–V801, F818–F838, and I857–M877. Residues L905–K955 are disordered. The segment covering M910 to K955 has biased composition (basic and acidic residues).

The protein belongs to the TrbL/VirB6 family.

It localises to the cell membrane. This is an uncharacterized protein from Rickettsia bellii (strain RML369-C).